A 300-amino-acid polypeptide reads, in one-letter code: Ribosomal protein L11 methyltransferase (300 aa).

S-adenosyl-L-methionine-binding residues include threonine 152, glycine 173, aspartate 195, and asparagine 234.

It belongs to the methyltransferase superfamily. PrmA family.

It is found in the cytoplasm. It catalyses the reaction L-lysyl-[protein] + 3 S-adenosyl-L-methionine = N(6),N(6),N(6)-trimethyl-L-lysyl-[protein] + 3 S-adenosyl-L-homocysteine + 3 H(+). Methylates ribosomal protein L11. In Burkholderia multivorans (strain ATCC 17616 / 249), this protein is Ribosomal protein L11 methyltransferase.